We begin with the raw amino-acid sequence, 65 residues long: Large ribosomal subunit protein bL31 (65 aa).

Cys16, Cys18, Cys36, and Cys39 together coordinate Zn(2+).

It belongs to the bacterial ribosomal protein bL31 family. Type A subfamily. Part of the 50S ribosomal subunit. Requires Zn(2+) as cofactor.

Functionally, binds the 23S rRNA. The polypeptide is Large ribosomal subunit protein bL31 (Geotalea uraniireducens (strain Rf4) (Geobacter uraniireducens)).